A 290-amino-acid chain; its full sequence is Short chain dehydrogenase andI (290 aa).

The NADP(+) site is built by isoleucine 35, asparagine 120, arginine 154, tyrosine 186, lysine 190, valine 219, and threonine 221. Tyrosine 186 (proton acceptor) is an active-site residue. Residue lysine 190 is the Lowers pKa of active site Tyr of the active site.

Belongs to the short-chain dehydrogenases/reductases (SDR) family.

Its pathway is secondary metabolite biosynthesis; terpenoid biosynthesis. Functionally, short chain dehydrogenase; part of the gene cluster that mediates the biosynthesis of anditomin, a fungal meroterpenoid. The first step of the pathway is the synthesis of 3,5-dimethylorsellinic acid (DMOA) by the polyketide synthase andM. DMOA is then converted to the phthalide compound 5,7-dihydroxy-4,6-dimethylphthalide (DHDMP) by the cytochrome P450 monooxygenase andK, which is further prenylated by the prenyltransferase andD to yield farnesyl-DHDMP. Further epoxidation by the FAD-dependent monooxygenase andE leads to epoxyfarnesyl-DHDMP. The next step involves the terpene cyclase andB that converts epoxyfarnesyl-DHDMP into preandiloid A through opening of the epoxide ring followed by the cyclization of the farnesyl moiety. Preandiloid A is in turn oxidized at the C-3 hydroxyl group to yield preandiloid B by the dehydrogenase andC. The dioxygenase andA is solely responsible for the dehydrogenation of preandiloid B leading to the enone preandiloid C, as well as for the intriguing structural rearrangement to generate the bicyclo[2.2.2]octane core, transforming preandiloid C into andiconin. FAD-binding monooxygenase andJ then produces andilesin D which is reduced by dehydrogenase andI to yield andilesin A. Action of acetyltransferase andG followed by a spontaneous acetate elimination leads then to andilesin B, which is in turn substrate of the short chain dehydrogenase andH to yield andilesin C. Finally, the dioxygenase andF catalyzes the transformation of andilesin C to anditomin. The sequence is that of Short chain dehydrogenase andI from Emericella variicolor (Aspergillus stellatus).